The sequence spans 811 residues: Glycerol-3-phosphate acyltransferase (811 aa).

An HXXXXD motif motif is present at residues 305–310 (CHRSHI).

This sequence belongs to the GPAT/DAPAT family.

The protein resides in the cell inner membrane. The enzyme catalyses sn-glycerol 3-phosphate + an acyl-CoA = a 1-acyl-sn-glycero-3-phosphate + CoA. Its pathway is phospholipid metabolism; CDP-diacylglycerol biosynthesis; CDP-diacylglycerol from sn-glycerol 3-phosphate: step 1/3. In Histophilus somni (strain 129Pt) (Haemophilus somnus), this protein is Glycerol-3-phosphate acyltransferase.